A 237-amino-acid polypeptide reads, in one-letter code: Sugar fermentation stimulation protein homolog (237 aa).

The protein belongs to the SfsA family.

The sequence is that of Sugar fermentation stimulation protein homolog from Thioalkalivibrio sulfidiphilus (strain HL-EbGR7).